A 238-amino-acid polypeptide reads, in one-letter code: MSNVNMDFEQAGELKIGQVGIATLRIRTLNVPRLIQEMSDRVTRAPKLFRRTAVILDFGELPHPPDLTTAKALVDGLRAANVLPVAIAYGTNEIDLLSQQLGLPLLSKFRAHYERQEVAAPPPQSTPPINTGRIQHTTVRSGQQLYAEHCDLTILNTVGAGAEVIADGNIHIYGTLRGRAMAGARGNAEMRIFCRDFQAELIAIAGRYKVLDDIPTELRGKAVQVWLEQNQIKIAALD.

It belongs to the MinC family. In terms of assembly, interacts with MinD and FtsZ.

Its function is as follows. Cell division inhibitor that blocks the formation of polar Z ring septums. Rapidly oscillates between the poles of the cell to destabilize FtsZ filaments that have formed before they mature into polar Z rings. Prevents FtsZ polymerization. In Xylella fastidiosa (strain M12), this protein is Probable septum site-determining protein MinC.